The following is a 406-amino-acid chain: NIPA-like protein 3 (406 aa).

4 helical membrane-spanning segments follow: residues N33–L53, W76–F96, L101–I121, and I135–A155. N166 carries an N-linked (GlcNAc...) asparagine glycan. A run of 5 helical transmembrane segments spans residues L171–L191, I202–A222, P240–L260, L271–F291, and V300–I320. S372 carries the phosphoserine modification.

Belongs to the NIPA family.

It is found in the membrane. The sequence is that of NIPA-like protein 3 (NIPAL3) from Pongo abelii (Sumatran orangutan).